A 235-amino-acid polypeptide reads, in one-letter code: Probable carboxylesterase Os04g0669600 (235 aa).

Active-site charge relay system residues include Ser-113, Asp-167, and His-199.

Belongs to the AB hydrolase superfamily. AB hydrolase 2 family.

In terms of biological role, possesses carboxylesterase activity in vitro. The protein is Probable carboxylesterase Os04g0669600 of Oryza sativa subsp. japonica (Rice).